A 635-amino-acid polypeptide reads, in one-letter code: DNA mismatch repair protein MutL (635 aa).

Residues 352 to 380 form a disordered region; it reads KAALQRGWVPPGAGRPGEGGGRAAPPPWR.

This sequence belongs to the DNA mismatch repair MutL/HexB family.

This protein is involved in the repair of mismatches in DNA. It is required for dam-dependent methyl-directed DNA mismatch repair. May act as a 'molecular matchmaker', a protein that promotes the formation of a stable complex between two or more DNA-binding proteins in an ATP-dependent manner without itself being part of a final effector complex. This Symbiobacterium thermophilum (strain DSM 24528 / JCM 14929 / IAM 14863 / T) protein is DNA mismatch repair protein MutL.